The sequence spans 302 residues: MQPLRPSPAAGGWAGVAGVGPTTVDEASMERSKSFVKALQELKNLRPQLYSASEYCEKSYLHSEQKQMVLENLKDYAVRAVVNAVDHLGTVAYKLTDLFEQQASEVSTVELKVARLNQQILTCQIFTDRAGLRQQKIGGTTFKHHKHYILPSTGHKRTQAARLQTDNGQDSKPKPYPSAKTLSWHLSSENSISTTGAQKYTFTLGDTISSKPASNGSMYLLGKDIPASPMHKPLQPNGNTSFDAKKNVGSKDQPGFMHMSTFNALDKPRGREIQKVPVSTKSMLATLFIKHKSAKTRKASVR.

Disordered regions lie at residues 151-179 and 220-256; these read PSTGHKRTQAARLQTDNGQDSKPKPYPSA and LLGKDIPASPMHKPLQPNGNTSFDAKKNVGSKDQPGF. Residues 161-170 are compositionally biased toward polar residues; the sequence is ARLQTDNGQD.

The protein belongs to the ABI family. Binds SCAR.

Its subcellular location is the cytoplasm. The protein resides in the cytoskeleton. Involved in regulation of actin and microtubule organization. Part of a WAVE complex that activates the Arp2/3 complex. This is Probable protein ABIL4 from Oryza sativa subsp. japonica (Rice).